Consider the following 273-residue polypeptide: Putative peptidyl-prolyl cis-trans isomerase Cbf2 (273 aa).

Residues 1–21 (MKKFSLVAATLIAGVVLNVNA) form the signal peptide. One can recognise a PpiC domain in the interval 131-228 (PARVQAKHIL…FGYHVILKEN (98 aa)).

It catalyses the reaction [protein]-peptidylproline (omega=180) = [protein]-peptidylproline (omega=0). The polypeptide is Putative peptidyl-prolyl cis-trans isomerase Cbf2 (cbf2) (Campylobacter jejuni subsp. jejuni serotype O:2 (strain ATCC 700819 / NCTC 11168)).